A 165-amino-acid chain; its full sequence is MSKMCSSVEIGDSMIYIFLFLILLIIDQYSKFIVDSTLSVGETVPVIDGFFNLTYVQNRGVAFGLFQGKIDIVSILAVIAIGLILFYFCKNFKKISFLERIAYTMIFSGAIGNMIDRLFRAYVVDMLDFRGIWSFIFNFADVWINIGVVLIIVEHIFFNRKKRVK.

3 consecutive transmembrane segments (helical) span residues Ser6–Ile26, Gly68–Phe88, and Ile95–Ile115. Active-site residues include Asp125 and Asp141. Residues Ile132–Ile152 traverse the membrane as a helical segment.

Belongs to the peptidase A8 family.

It localises to the cell inner membrane. It catalyses the reaction Release of signal peptides from bacterial membrane prolipoproteins. Hydrolyzes -Xaa-Yaa-Zaa-|-(S,diacylglyceryl)Cys-, in which Xaa is hydrophobic (preferably Leu), and Yaa (Ala or Ser) and Zaa (Gly or Ala) have small, neutral side chains.. Its pathway is protein modification; lipoprotein biosynthesis (signal peptide cleavage). In terms of biological role, this protein specifically catalyzes the removal of signal peptides from prolipoproteins. The chain is Lipoprotein signal peptidase from Fusobacterium nucleatum subsp. nucleatum (strain ATCC 25586 / DSM 15643 / BCRC 10681 / CIP 101130 / JCM 8532 / KCTC 2640 / LMG 13131 / VPI 4355).